We begin with the raw amino-acid sequence, 171 residues long: 3-hydroxyanthranilate 3,4-dioxygenase (171 aa).

Position 44 (R44) interacts with O2. Residues H48, E54, and H92 each contribute to the Fe cation site. Position 54 (E54) interacts with substrate. Substrate-binding residues include R96 and E106. C121, C126, C160, and C163 together coordinate a divalent metal cation.

The protein belongs to the 3-HAO family. Fe(2+) is required as a cofactor.

The protein localises to the cytoplasm. The catalysed reaction is 3-hydroxyanthranilate + O2 = (2Z,4Z)-2-amino-3-carboxymuconate 6-semialdehyde. Its pathway is cofactor biosynthesis; NAD(+) biosynthesis; quinolinate from L-kynurenine: step 3/3. Functionally, catalyzes the oxidative ring opening of 3-hydroxyanthranilate to 2-amino-3-carboxymuconate semialdehyde, which spontaneously cyclizes to quinolinate. This Yarrowia lipolytica (strain CLIB 122 / E 150) (Yeast) protein is 3-hydroxyanthranilate 3,4-dioxygenase.